A 132-amino-acid polypeptide reads, in one-letter code: Small ribosomal subunit protein uS8 (132 aa).

Belongs to the universal ribosomal protein uS8 family. Part of the 30S ribosomal subunit. Contacts proteins S5 and S12.

In terms of biological role, one of the primary rRNA binding proteins, it binds directly to 16S rRNA central domain where it helps coordinate assembly of the platform of the 30S subunit. This chain is Small ribosomal subunit protein uS8, found in Clostridium kluyveri (strain NBRC 12016).